We begin with the raw amino-acid sequence, 2110 residues long: Tenascin (2110 aa).

An N-terminal signal peptide occupies residues 1–22 (MGAVTWLLPGIFLALFALTPEG). Asparagine 38 carries an N-linked (GlcNAc...) asparagine glycan. Serine 65, serine 70, and serine 72 each carry phosphoserine. The interval 69–91 (ESASGEKDLTPTPESSGSFQEHT) is disordered. Serine 72 carries an O-linked (Xyl...) (chondroitin sulfate) serine glycan. Positions 80 to 89 (TPESSGSFQE) are enriched in polar residues. The stretch at 118–142 (DVKELLSRLEELELLVSSLREQCTM) forms a coiled coil. N-linked (GlcNAc...) asparagine glycosylation is found at asparagine 166 and asparagine 184. The region spanning 174–185 (CVCEPGWKGPNC) is the EGF-like 1; incomplete domain. EGF-like domains follow at residues 186 to 216 (SEPD…GEDC), 217 to 247 (SQLA…GPDC), 248 to 279 (GLEV…GEDC), 280 to 310 (NEPL…GEDC), 311 to 341 (SELI…GEDC), 342 to 372 (GELT…GADC), 373 to 403 (SEKR…GADC), 404 to 434 (GDLQ…GEDC), 435 to 465 (SQRR…GFDC), 466 to 496 (SEMS…GEDC), 497 to 527 (RDRR…GPDC), 528 to 558 (AELS…GKDC), 559 to 589 (KEQR…GLDC), and 590 to 621 (GQRS…IDCS). Intrachain disulfides connect cysteine 190-cysteine 200, cysteine 194-cysteine 205, cysteine 207-cysteine 216, cysteine 221-cysteine 231, cysteine 225-cysteine 236, cysteine 238-cysteine 247, cysteine 252-cysteine 263, cysteine 256-cysteine 268, cysteine 270-cysteine 279, cysteine 284-cysteine 294, cysteine 288-cysteine 299, cysteine 301-cysteine 310, cysteine 315-cysteine 325, cysteine 319-cysteine 330, cysteine 332-cysteine 341, cysteine 346-cysteine 356, cysteine 350-cysteine 361, cysteine 363-cysteine 372, cysteine 377-cysteine 387, cysteine 381-cysteine 392, cysteine 394-cysteine 403, cysteine 408-cysteine 418, cysteine 412-cysteine 423, cysteine 425-cysteine 434, cysteine 439-cysteine 449, cysteine 443-cysteine 454, cysteine 456-cysteine 465, cysteine 470-cysteine 480, cysteine 474-cysteine 485, cysteine 487-cysteine 496, cysteine 501-cysteine 511, cysteine 505-cysteine 516, cysteine 518-cysteine 527, cysteine 532-cysteine 542, cysteine 536-cysteine 547, cysteine 549-cysteine 558, cysteine 563-cysteine 573, cysteine 567-cysteine 578, cysteine 580-cysteine 589, cysteine 594-cysteine 604, cysteine 598-cysteine 609, and cysteine 611-cysteine 620. A glycan (N-linked (GlcNAc...) asparagine) is linked at asparagine 327. 14 Fibronectin type-III domains span residues 625–715 (PPKD…LPAP), 716–804 (EGLK…TRLD), 805–894 (APSH…TGLD), 895–988 (APRN…IDAP), 989–1077 (KDLR…VPSL), 1078–1165 (ENLT…TGTT), 1167–1259 (NLGE…LPQL), 1260–1348 (GGLS…AREP), 1349–1440 (EIGN…ALPL), 1442–1530 (ENLT…EAEP), 1531–1620 (EVDN…TAMG), 1621–1710 (SPKE…ALDG), 1711–1797 (PSGL…TDLD), and 1798–1886 (SPRE…IGLL). Asparagine 788 carries N-linked (GlcNAc...) asparagine glycosylation. Phosphothreonine is present on threonine 905. N-linked (GlcNAc...) asparagine glycans are attached at residues asparagine 1018, asparagine 1079, asparagine 1093, asparagine 1119, asparagine 1184, asparagine 1210, asparagine 1275, asparagine 1301, asparagine 1354, asparagine 1364, asparagine 1394, and asparagine 1443. N-linked (GlcNAc...) asparagine glycosylation occurs at asparagine 1718. A Fibrinogen C-terminal domain is found at 1884 to 2099 (GLLYPFPRDC…FAEMKLRPSN (216 aa)). N-linked (GlcNAc...) asparagine glycans are attached at residues asparagine 1969 and asparagine 2071.

It belongs to the tenascin family. Homohexamer; disulfide-linked. A homotrimer may be formed in the triple coiled-coil region and may be stabilized by disulfide rings at both ends. Two of such half-hexabrachions may be disulfide linked within the central globule. Interacts with CSPG4. Interacts (via the 3rd fibronectin type-III domain) with integrin ITGA9:ITGB1. N-glycosylated. As to expression, expressed in the corneal limbus, the periosteum and the rib molecular layer of the cerebellum, the matrix of kidney tubules, blood vessels, stomach and intestine (at protein level). Weakly expressed in the brain. In terms of tissue distribution, highly expressed in the thymus and moderately expressed in the brain.

The protein resides in the secreted. Its subcellular location is the extracellular space. It localises to the extracellular matrix. Extracellular matrix protein implicated in guidance of migrating neurons as well as axons during development, synaptic plasticity as well as neuronal regeneration. Promotes neurite outgrowth when provided to neurons in culture. May play a role in supporting the growth of epithelial tumors. Ligand for integrins ITGA8:ITGB1, ITGA9:ITGB1, ITGAV:ITGB3 and ITGAV:ITGB6. In tumors, stimulates angiogenesis by elongation, migration and sprouting of endothelial cells. This is Tenascin from Mus musculus (Mouse).